A 129-amino-acid chain; its full sequence is Transcription antitermination protein NusB (129 aa).

It belongs to the NusB family.

Functionally, involved in transcription antitermination. Required for transcription of ribosomal RNA (rRNA) genes. Binds specifically to the boxA antiterminator sequence of the ribosomal RNA (rrn) operons. The protein is Transcription antitermination protein NusB of Staphylococcus aureus (strain MRSA252).